A 155-amino-acid chain; its full sequence is 6,7-dimethyl-8-ribityllumazine synthase (155 aa).

5-amino-6-(D-ribitylamino)uracil contacts are provided by residues phenylalanine 24, alanine 58 to glutamate 60, and valine 82 to isoleucine 84. Alanine 87–threonine 88 is a binding site for (2S)-2-hydroxy-3-oxobutyl phosphate. The Proton donor role is filled by histidine 90. Position 115 (phenylalanine 115) interacts with 5-amino-6-(D-ribitylamino)uracil. Position 129 (arginine 129) interacts with (2S)-2-hydroxy-3-oxobutyl phosphate.

It belongs to the DMRL synthase family.

The catalysed reaction is (2S)-2-hydroxy-3-oxobutyl phosphate + 5-amino-6-(D-ribitylamino)uracil = 6,7-dimethyl-8-(1-D-ribityl)lumazine + phosphate + 2 H2O + H(+). Its pathway is cofactor biosynthesis; riboflavin biosynthesis; riboflavin from 2-hydroxy-3-oxobutyl phosphate and 5-amino-6-(D-ribitylamino)uracil: step 1/2. In terms of biological role, catalyzes the formation of 6,7-dimethyl-8-ribityllumazine by condensation of 5-amino-6-(D-ribitylamino)uracil with 3,4-dihydroxy-2-butanone 4-phosphate. This is the penultimate step in the biosynthesis of riboflavin. The polypeptide is 6,7-dimethyl-8-ribityllumazine synthase (Chloroherpeton thalassium (strain ATCC 35110 / GB-78)).